Here is a 335-residue protein sequence, read N- to C-terminus: Mycobacterial beta-ketoacyl-[acyl-carrier-protein] synthase III (335 aa).

Residues Cys-122 and His-258 contribute to the active site. Residues 259–263 form an ACP-binding region; sequence QANSR. Asn-289 is a catalytic residue.

This sequence belongs to the thiolase-like superfamily. FabH family. Homodimer.

The protein resides in the cytoplasm. It catalyses the reaction malonyl-[ACP] + dodecanoyl-CoA + H(+) = 3-oxotetradecanoyl-[ACP] + CO2 + CoA. The protein operates within lipid metabolism; fatty acid biosynthesis. Its pathway is lipid metabolism; mycolic acid biosynthesis. Functionally, catalyzes the condensation reaction of fatty acid synthesis by the addition to an acyl acceptor of two carbons from malonyl-ACP. Catalyzes the first condensation reaction which initiates fatty acid synthesis and may therefore play a role in governing the total rate of fatty acid production. Possesses both acetoacetyl-ACP synthase and acetyl transacylase activities. Its substrate specificity determines the biosynthesis of branched-chain and/or straight-chain of fatty acids. This is Mycobacterial beta-ketoacyl-[acyl-carrier-protein] synthase III from Mycobacterium ulcerans (strain Agy99).